A 293-amino-acid polypeptide reads, in one-letter code: Sec-independent protein translocase protein TatC (293 aa).

6 helical membrane-spanning segments follow: residues 35–55 (AAIA…QPFI), 87–107 (LLKV…LYQA), 123–143 (LFGF…ISYF), 173–193 (ILKF…LVGI), 204–224 (ILKS…LTAP), and 228–248 (IMMM…AIGI).

It belongs to the TatC family. The Tat system comprises two distinct complexes: a TatABC complex, containing multiple copies of TatA, TatB and TatC subunits, and a separate TatA complex, containing only TatA subunits. Substrates initially bind to the TatABC complex, which probably triggers association of the separate TatA complex to form the active translocon.

Its subcellular location is the cell membrane. Functionally, part of the twin-arginine translocation (Tat) system that transports large folded proteins containing a characteristic twin-arginine motif in their signal peptide across membranes. Together with TatB, TatC is part of a receptor directly interacting with Tat signal peptides. This Rothia mucilaginosa (strain DY-18) (Stomatococcus mucilaginosus) protein is Sec-independent protein translocase protein TatC.